The chain runs to 179 residues: TM2 domain-containing protein Y66D12A.21 (179 aa).

Positions 1 to 18 (MRQLLLTLSLISVSASDA) are cleaved as a signal peptide. Residues 19-82 (TVKCDDLDPN…IFNRTVPSAC (64 aa)) lie on the Extracellular side of the membrane. The N-linked (GlcNAc...) asparagine glycan is linked to asparagine 75. Residues 83-105 (HYGAHVSYTTTVLLSIFLGFFGI) traverse the membrane as a helical segment. In terms of domain architecture, TM2 spans 88–135 (VSYTTTVLLSIFLGFFGIDRIYLGYYALGLIKMFSLGGLFVFWLVDII). Topologically, residues 106-109 (DRIY) are cytoplasmic. The chain crosses the membrane as a helical span at residues 110 to 132 (LGYYALGLIKMFSLGGLFVFWLV). Residues 133-179 (DIILISLQLLGPADGTAYAMAYYGPKAQMIRFDSHTNFSFYTCDGCL) are Extracellular-facing. N-linked (GlcNAc...) asparagine glycosylation is present at asparagine 169.

The protein belongs to the TM2 family.

The protein resides in the membrane. The polypeptide is TM2 domain-containing protein Y66D12A.21 (Caenorhabditis elegans).